Here is a 221-residue protein sequence, read N- to C-terminus: Protein-L-isoaspartate O-methyltransferase (221 aa).

Residue S68 is part of the active site.

The protein belongs to the methyltransferase superfamily. L-isoaspartyl/D-aspartyl protein methyltransferase family.

The protein resides in the cytoplasm. The enzyme catalyses [protein]-L-isoaspartate + S-adenosyl-L-methionine = [protein]-L-isoaspartate alpha-methyl ester + S-adenosyl-L-homocysteine. Catalyzes the methyl esterification of L-isoaspartyl residues in peptides and proteins that result from spontaneous decomposition of normal L-aspartyl and L-asparaginyl residues. It plays a role in the repair and/or degradation of damaged proteins. The sequence is that of Protein-L-isoaspartate O-methyltransferase from Desulfosudis oleivorans (strain DSM 6200 / JCM 39069 / Hxd3) (Desulfococcus oleovorans).